A 38-amino-acid polypeptide reads, in one-letter code: NLYQFGNMIQCTIPKRLSWSSFVDYGCYCGKGGSGTPV.

Residues Tyr-28, Gly-30, and Gly-32 each contribute to the Ca(2+) site.

Belongs to the phospholipase A2 family. Group I subfamily. The cofactor is Ca(2+). Expressed by the venom gland.

The protein resides in the secreted. It carries out the reaction a 1,2-diacyl-sn-glycero-3-phosphocholine + H2O = a 1-acyl-sn-glycero-3-phosphocholine + a fatty acid + H(+). Functionally, snake venom phospholipase A2 (PLA2) that inhibits neuromuscular transmission by blocking acetylcholine release from the nerve termini. PLA2 catalyzes the calcium-dependent hydrolysis of the 2-acyl groups in 3-sn-phosphoglycerides. This is Phospholipase A2 1 from Calliophis bivirgatus (Blue Malaysian coral snake).